We begin with the raw amino-acid sequence, 355 residues long: Probable L-aspartate decarboxylase (355 aa).

Lysine 210 bears the N6-(pyridoxal phosphate)lysine mark.

The protein belongs to the group II decarboxylase family. MfnA subfamily. Pyridoxal 5'-phosphate is required as a cofactor.

The enzyme catalyses L-aspartate + H(+) = beta-alanine + CO2. It participates in cofactor biosynthesis; coenzyme A biosynthesis. Its function is as follows. Catalyzes the decarboxylation of L-aspartate to produce beta-alanine. The protein is Probable L-aspartate decarboxylase of Halobacterium salinarum (strain ATCC 29341 / DSM 671 / R1).